A 405-amino-acid chain; its full sequence is Lipase lipl-1 (405 aa).

Residues 1–20 form the signal peptide; sequence MRSWSTVMLAVLATAATVFG. Asparagine 66 carries an N-linked (GlcNAc...) asparagine glycan. Catalysis depends on serine 169, which acts as the Nucleophile. N-linked (GlcNAc...) asparagine glycosylation occurs at asparagine 273. Active-site charge relay system residues include aspartate 344 and histidine 376.

Belongs to the AB hydrolase superfamily. Lipase family.

The protein resides in the secreted. Its subcellular location is the lysosome lumen. Its function is as follows. Lipase that, together with lipl-3, plays a role in the response to nutrient deprivation by controlling lipid metabolism. Specifically, involved in the breakdown of lipids during lipophagy, a process during which lipids contained in lipid droplets that have been delivered to lysosomes by autophagy are degraded. This chain is Lipase lipl-1, found in Caenorhabditis elegans.